The sequence spans 468 residues: Ribulose bisphosphate carboxylase large chain (468 aa).

Position 5 is an N6,N6,N6-trimethyllysine (Lys-5). Substrate-binding residues include Asn-114 and Thr-164. The active-site Proton acceptor is the Lys-166. Position 168 (Lys-168) interacts with substrate. Lys-192, Asp-194, and Glu-195 together coordinate Mg(2+). An N6-carboxylysine modification is found at Lys-192. His-285 acts as the Proton acceptor in catalysis. Substrate is bound by residues Arg-286, His-318, and Ser-370.

The protein belongs to the RuBisCO large chain family. Type I subfamily. As to quaternary structure, heterohexadecamer of 8 large chains and 8 small chains; disulfide-linked. The disulfide link is formed within the large subunit homodimers. Mg(2+) is required as a cofactor. Post-translationally, the disulfide bond which can form in the large chain dimeric partners within the hexadecamer appears to be associated with oxidative stress and protein turnover.

It is found in the plastid. The protein resides in the chloroplast. The enzyme catalyses 2 (2R)-3-phosphoglycerate + 2 H(+) = D-ribulose 1,5-bisphosphate + CO2 + H2O. The catalysed reaction is D-ribulose 1,5-bisphosphate + O2 = 2-phosphoglycolate + (2R)-3-phosphoglycerate + 2 H(+). Functionally, ruBisCO catalyzes two reactions: the carboxylation of D-ribulose 1,5-bisphosphate, the primary event in carbon dioxide fixation, as well as the oxidative fragmentation of the pentose substrate in the photorespiration process. Both reactions occur simultaneously and in competition at the same active site. This is Ribulose bisphosphate carboxylase large chain from Salvia divinorum (Maria pastora).